The following is a 408-amino-acid chain: Argininosuccinate synthase (408 aa).

Residues 11–19 and Ala-38 contribute to the ATP site; that span reads AYSGGLDTS. L-citrulline-binding residues include Tyr-91 and Ser-96. Gly-121 contacts ATP. L-aspartate is bound by residues Thr-123, Asn-127, and Asp-128. Asn-127 contributes to the L-citrulline binding site. L-citrulline contacts are provided by Arg-131, Ser-182, Ser-191, Glu-267, and Tyr-279.

The protein belongs to the argininosuccinate synthase family. Type 1 subfamily. Homotetramer.

The protein localises to the cytoplasm. It catalyses the reaction L-citrulline + L-aspartate + ATP = 2-(N(omega)-L-arginino)succinate + AMP + diphosphate + H(+). It participates in amino-acid biosynthesis; L-arginine biosynthesis; L-arginine from L-ornithine and carbamoyl phosphate: step 2/3. The protein is Argininosuccinate synthase of Paracoccus denitrificans (strain Pd 1222).